We begin with the raw amino-acid sequence, 92 residues long: PqqA binding protein (92 aa).

Belongs to the PqqD family. Monomer. Interacts with PqqE.

It functions in the pathway cofactor biosynthesis; pyrroloquinoline quinone biosynthesis. Its function is as follows. Functions as a PqqA binding protein and presents PqqA to PqqE, in the pyrroloquinoline quinone (PQQ) biosynthetic pathway. This is PqqA binding protein from Xanthomonas campestris pv. campestris (strain B100).